The primary structure comprises 303 residues: Probable porphobilinogen deaminase (303 aa).

At Cys-240 the chain carries S-(dipyrrolylmethanemethyl)cysteine.

It belongs to the HMBS family. Dipyrromethane serves as cofactor.

The enzyme catalyses 4 porphobilinogen + H2O = hydroxymethylbilane + 4 NH4(+). It functions in the pathway porphyrin-containing compound metabolism; protoporphyrin-IX biosynthesis; coproporphyrinogen-III from 5-aminolevulinate: step 2/4. Its function is as follows. Tetrapolymerization of the monopyrrole PBG into the hydroxymethylbilane pre-uroporphyrinogen in several discrete steps. The sequence is that of Probable porphobilinogen deaminase from Hyperthermus butylicus (strain DSM 5456 / JCM 9403 / PLM1-5).